Here is a 398-residue protein sequence, read N- to C-terminus: 1-deoxy-D-xylulose 5-phosphate reductoisomerase (398 aa).

Residues Thr-11, Gly-12, Ser-13, Ile-14, Arg-38, Asn-39, and Asn-125 each contribute to the NADPH site. Lys-126 lines the 1-deoxy-D-xylulose 5-phosphate pocket. Glu-127 contacts NADPH. Asp-151 lines the Mn(2+) pocket. Residues Ser-152, Glu-153, Ser-179, and His-202 each coordinate 1-deoxy-D-xylulose 5-phosphate. Glu-153 contributes to the Mn(2+) binding site. Residue Gly-208 coordinates NADPH. 1-deoxy-D-xylulose 5-phosphate is bound by residues Ser-215, Asn-220, Lys-221, and Glu-224. Glu-224 is a binding site for Mn(2+).

The protein belongs to the DXR family. The cofactor is Mg(2+). Mn(2+) serves as cofactor.

The catalysed reaction is 2-C-methyl-D-erythritol 4-phosphate + NADP(+) = 1-deoxy-D-xylulose 5-phosphate + NADPH + H(+). It participates in isoprenoid biosynthesis; isopentenyl diphosphate biosynthesis via DXP pathway; isopentenyl diphosphate from 1-deoxy-D-xylulose 5-phosphate: step 1/6. Its function is as follows. Catalyzes the NADPH-dependent rearrangement and reduction of 1-deoxy-D-xylulose-5-phosphate (DXP) to 2-C-methyl-D-erythritol 4-phosphate (MEP). The polypeptide is 1-deoxy-D-xylulose 5-phosphate reductoisomerase (Burkholderia lata (strain ATCC 17760 / DSM 23089 / LMG 22485 / NCIMB 9086 / R18194 / 383)).